We begin with the raw amino-acid sequence, 594 residues long: Nucleolar protein 56 (594 aa).

Residues Lys-87, Lys-230, and Lys-240 each participate in a glycyl lysine isopeptide (Lys-Gly) (interchain with G-Cter in SUMO2) cross-link. Residues 292–410 (VAPSLSALIG…VEERLSFYET (119 aa)) form the Nop domain. Ser-314 is subject to Phosphoserine. Arg-359 carries the omega-N-methylarginine modification. 2 stretches are compositionally biased toward low complexity: residues 458–469 (ALASSENSSSTP) and 488–504 (QEVP…ISFS). Residues 458 to 594 (ALASSENSSS…KKFHKASQED (137 aa)) form a disordered region. A phosphoserine mark is found at Ser-466 and Ser-467. Thr-468 bears the Phosphothreonine mark. Phosphoserine occurs at positions 511, 519, 520, and 537. A Glycyl lysine isopeptide (Lys-Gly) (interchain with G-Cter in SUMO2) cross-link involves residue Lys-540. N6-acetyllysine is present on Lys-561. Residue Ser-563 is modified to Phosphoserine. Lys-564 participates in a covalent cross-link: Glycyl lysine isopeptide (Lys-Gly) (interchain with G-Cter in SUMO2). Phosphoserine is present on residues Ser-569, Ser-570, Ser-579, and Ser-581. The segment covering 580–594 (SSKKKKKFHKASQED) has biased composition (basic residues).

It belongs to the NOP5/NOP56 family. Part of a large pre-ribosomal ribonucleoprotein (RNP) complex, that consists of at least 62 ribosomal proteins, 45 nonribosomal proteins and both pre-rRNA and mature rRNA species. Within this complex directly interacts with TCOF1 in an RNA-independent manner. Core component of box C/D small nucleolar ribonucleoprotein (snoRNP) particles; the core proteins SNU13, NOP56, NOP58 and FBL or FBLL1 assemble stepwise onto the snoRNA. Interacts with NOP1 and NOP58. Interacts with NUFIP1, RUVBL1 and RUVBL2; RUVBL1:RUVBL2 seem to bridge the association of NOP56 with NUFIP1. Part of the small subunit (SSU) processome, composed of more than 70 proteins and the RNA chaperone small nucleolar RNA (snoRNA) U3. Interacts with NOP2 and FBL.

The protein resides in the nucleus. The protein localises to the nucleolus. Its subcellular location is the cytoplasm. It is found in the nucleoplasm. Involved in the early to middle stages of 60S ribosomal subunit biogenesis. Required for the biogenesis of box C/D snoRNAs such U3, U8 and U14 snoRNAs. Part of the small subunit (SSU) processome, first precursor of the small eukaryotic ribosomal subunit. During the assembly of the SSU processome in the nucleolus, many ribosome biogenesis factors, an RNA chaperone and ribosomal proteins associate with the nascent pre-rRNA and work in concert to generate RNA folding, modifications, rearrangements and cleavage as well as targeted degradation of pre-ribosomal RNA by the RNA exosome. Core component of box C/D small nucleolar ribonucleoprotein (snoRNP) complexes that function in methylation of multiple sites on ribosomal RNAs (rRNAs) and messenger RNAs (mRNAs). This Homo sapiens (Human) protein is Nucleolar protein 56.